A 198-amino-acid chain; its full sequence is Recombination protein RecR (198 aa).

Residues 58–73 (CSICGNFTDSDPCAIC) form a C4-type zinc finger. One can recognise a Toprim domain in the interval 81–175 (SIICVIEEPK…KVTRIAHGIP (95 aa)).

It belongs to the RecR family.

May play a role in DNA repair. It seems to be involved in an RecBC-independent recombinational process of DNA repair. It may act with RecF and RecO. This chain is Recombination protein RecR, found in Clostridium kluyveri (strain NBRC 12016).